Here is a 218-residue protein sequence, read N- to C-terminus: Probable nicotinate-nucleotide adenylyltransferase (218 aa).

The protein belongs to the NadD family.

It carries out the reaction nicotinate beta-D-ribonucleotide + ATP + H(+) = deamido-NAD(+) + diphosphate. Its pathway is cofactor biosynthesis; NAD(+) biosynthesis; deamido-NAD(+) from nicotinate D-ribonucleotide: step 1/1. Its function is as follows. Catalyzes the reversible adenylation of nicotinate mononucleotide (NaMN) to nicotinic acid adenine dinucleotide (NaAD). This chain is Probable nicotinate-nucleotide adenylyltransferase, found in Burkholderia lata (strain ATCC 17760 / DSM 23089 / LMG 22485 / NCIMB 9086 / R18194 / 383).